Consider the following 131-residue polypeptide: Transcription antitermination protein NusB (131 aa).

The protein belongs to the NusB family.

Involved in transcription antitermination. Required for transcription of ribosomal RNA (rRNA) genes. Binds specifically to the boxA antiterminator sequence of the ribosomal RNA (rrn) operons. This chain is Transcription antitermination protein NusB, found in Caldicellulosiruptor saccharolyticus (strain ATCC 43494 / DSM 8903 / Tp8T 6331).